A 293-amino-acid chain; its full sequence is tRNA-cytidine(32) 2-sulfurtransferase (293 aa).

Positions Ser-71 to Ser-76 match the PP-loop motif motif. Residues Cys-146, Cys-149, and Cys-237 each contribute to the [4Fe-4S] cluster site.

Belongs to the TtcA family. Homodimer. Mg(2+) is required as a cofactor. Requires [4Fe-4S] cluster as cofactor.

The protein localises to the cytoplasm. The catalysed reaction is cytidine(32) in tRNA + S-sulfanyl-L-cysteinyl-[cysteine desulfurase] + AH2 + ATP = 2-thiocytidine(32) in tRNA + L-cysteinyl-[cysteine desulfurase] + A + AMP + diphosphate + H(+). Its pathway is tRNA modification. Its function is as follows. Catalyzes the ATP-dependent 2-thiolation of cytidine in position 32 of tRNA, to form 2-thiocytidine (s(2)C32). The sulfur atoms are provided by the cysteine/cysteine desulfurase (IscS) system. In Sinorhizobium medicae (strain WSM419) (Ensifer medicae), this protein is tRNA-cytidine(32) 2-sulfurtransferase.